A 572-amino-acid polypeptide reads, in one-letter code: AAA ATPase forming ring-shaped complexes (572 aa).

The disordered stretch occupies residues 1 to 22 (MTEPRHESGSAAPQRPATDPVQ). The stretch at 21–67 (VQRQVNLLRDQKRNLDKQAAALASQNEKLVRLLNASRQEIVGLKKTL) forms a coiled coil. An ATP-binding site is contributed by 270-275 (GNGKTL). Residues 527–539 (HEQQDLPDTEDSE) show a composition bias toward acidic residues. The disordered stretch occupies residues 527–572 (HEQQDLPDTEDSEDWARLTGRRGDTIDSVHMASHRPQGEPGPGATP).

This sequence belongs to the AAA ATPase family. In terms of assembly, homohexamer. Assembles into a hexameric ring structure.

This chain is AAA ATPase forming ring-shaped complexes, found in Kocuria rhizophila (strain ATCC 9341 / DSM 348 / NBRC 103217 / DC2201).